A 585-amino-acid polypeptide reads, in one-letter code: Involucrin (585 aa).

Residues 1-15 (MSQQHTLPVTLSPAL) show a composition bias toward polar residues. A disordered region spans residues 1 to 132 (MSQQHTLPVT…LEEEKKLLDQ (132 aa)). The Omega-hydroxyceramide glutamate ester moiety is linked to residue glutamine 79. Residues 92 to 115 (WEQHEEYQKAENPEQQLKQEKTQR) are compositionally biased toward basic and acidic residues. Omega-hydroxyceramide glutamate ester attachment occurs at residues glutamine 118 and glutamine 133. The disordered stretch occupies residues 149 to 540 (KEQLLELPEQ…KDLEQQKGQL (392 aa)). Tandem repeats lie at residues 153–162 (LELPEQQEGH), 163–172 (LKHLEQQEGQ), 173–182 (LKHPEQQEGQ), 183–192 (LELPEQQEGQ), 193–202 (LELPEQQEGQ), 203–212 (LELPEQQEGQ), 213–222 (LELPEQQEGQ), 223–232 (LELPEQQEGQ), 233–242 (LELPQQQEGQ), 243–252 (LELSEQQEGQ), 253–262 (LELSEQQEGQ), 263–272 (LKHLEHQEGQ), 273–282 (LEVPEEQMGQ), 283–292 (LKYLEQQEGQ), 293–302 (LKHLDQQEKQ), 303–312 (PELPEQQMGQ), 313–322 (LKHLEQQEGQ), 323–332 (PKHLEQQEGQ), 333–342 (LEQLEEQEGQ), 343–352 (LKHLEQQEGQ), 353–362 (LEHLEHQEGQ), 363–372 (LGLPEQQVLQ), and 373–382 (LKQLEKQQGQ). The tract at residues 153–542 (LELPEQQEGH…LEQQKGQLEQ (390 aa)) is 39 X 10 AA approximate tandem repeats of [LP]-[EKG]-[LHVYQEK]-[PLSQE]-[EQDV]-[QHEKRGA]-Q-[EMVQLP]-[GKLE]-[QHVNLD]. Residues 159–178 (QEGHLKHLEQQEGQLKHPEQ) show a composition bias toward basic and acidic residues. Residues 179–261 (QEGQLELPEQ…QLELSEQQEG (83 aa)) show a composition bias toward low complexity. A compositionally biased stretch (basic and acidic residues) spans 262 to 271 (QLKHLEHQEG). 3 stretches are compositionally biased toward basic and acidic residues: residues 292–304 (QLKH…KQPE), 314–328 (KHLE…HLEQ), and 341–360 (GQLK…EHQE). Over residues 361-383 (GQLGLPEQQVLQLKQLEKQQGQP) the composition is skewed to low complexity. The stretch at 383–392 (PKHLEEEEGQ) is one 24; approximate repeat. A compositionally biased stretch (basic and acidic residues) spans 384-393 (KHLEEEEGQL). 11 tandem repeats follow at residues 393 to 402 (LKHLVQQEGQ), 403 to 412 (LKHLVQQEGQ), 413 to 422 (LEQQERQVEH), 423 to 432 (LEQQVGQLKH), 433 to 442 (LEEQEGQLKH), 443 to 452 (LEQQQGQLEV), 453 to 462 (PEQQVGQPKN), 463 to 472 (LEQEEKQLEL), 473 to 482 (PEQQEGQVKH), 483 to 492 (LEKQEAQLEL), and 493 to 502 (PEQQVGQPKH). Composition is skewed to basic and acidic residues over residues 415 to 424 (QQERQVEHLE) and 431 to 444 (KHLE…KHLE). The segment covering 445 to 462 (QQQGQLEVPEQQVGQPKN) has biased composition (low complexity). The span at 479–488 (QVKHLEKQEA) shows a compositional bias: basic and acidic residues. Glutamine 496 is covalently cross-linked (Isoglutamyl lysine isopeptide (Gln-Lys) (interchain with K-? in other proteins)). Basic and acidic residues predominate over residues 501–535 (KHLEQQEKHLEHPEQQDGQLKHLEQQEGQLKDLEQ). Residues 503-512 (LEQQEKHLEH) form a 36; approximate repeat. Tandem repeats lie at residues 513–522 (PEQQDGQLKH) and 523–532 (LEQQEGQLKD). The 39; approximate repeat unit spans residues 533 to 542 (LEQQKGQLEQ).

Belongs to the involucrin family. As to quaternary structure, directly or indirectly cross-linked to cornifelin (CNFN). In terms of processing, substrate of transglutaminase. Some glutamines and lysines are cross-linked to other involucrin molecules, to other proteins such as keratin, desmoplakin, periplakin and envoplakin, and to lipids like omega-hydroxyceramide. As to expression, keratinocytes of epidermis and other stratified squamous epithelia.

The protein resides in the cytoplasm. Its function is as follows. Part of the insoluble cornified cell envelope (CE) of stratified squamous epithelia. This Homo sapiens (Human) protein is Involucrin (IVL).